The primary structure comprises 356 residues: Tricetin 3',4',5'-O-trimethyltransferase (356 aa).

123–129 is a substrate binding site; it reads MNQDKVL. The interval 155-173 is substrate binding; it reads AFEYHGTDPRFNRVFNEGM. G201, D224, D244, M245, and K258 together coordinate S-adenosyl-L-methionine. H262 serves as the catalytic Proton acceptor.

It belongs to the class I-like SAM-binding methyltransferase superfamily. Cation-independent O-methyltransferase family. COMT subfamily. In terms of assembly, homodimer. The monomer is fully active and dimerization is not required for sequential methylation. Expressed in roots, stems and leaves.

It carries out the reaction tricetin + 3 S-adenosyl-L-methionine = 3',4',5'-O-trimethyltricetin + 3 S-adenosyl-L-homocysteine + 3 H(+). Its function is as follows. Flavonoid B-ring-specific O-methyltransferase with a preference for flavones &gt; dihydroflavones &gt; flavonols that possess at least two B-ring hydroxyl groups. Active with tricetin, 5-hydroxyferulic acid, luteolin, quercitin, eriodictyol, quercetagetin, taxifolin, gossypetin and myricetin. No activity with naringenin, apigenin, kaempferol, 7,8-dihydroxy- or 5,7,8-trihydroxy flavones, chlorogenic acid, gallic acid or daphnetin. Catalyzes the sequential O-methylation of tricetin via 3'-O-methyltricetin, 3',5'-O-methyltricetin to 3',4',5'-O-trimethyltricetin. May also be involved in S lignin biosynthesis. This is Tricetin 3',4',5'-O-trimethyltransferase (OMT2) from Triticum aestivum (Wheat).